Here is a 188-residue protein sequence, read N- to C-terminus: Elongation factor P (188 aa).

N6-(3,6-diaminohexanoyl)-5-hydroxylysine is present on K34.

It belongs to the elongation factor P family. May be beta-lysylated on the epsilon-amino group of Lys-34 by the combined action of EpmA and EpmB, and then hydroxylated on the C5 position of the same residue by EpmC (if this protein is present). Lysylation is critical for the stimulatory effect of EF-P on peptide-bond formation. The lysylation moiety may extend toward the peptidyltransferase center and stabilize the terminal 3-CCA end of the tRNA. Hydroxylation of the C5 position on Lys-34 may allow additional potential stabilizing hydrogen-bond interactions with the P-tRNA.

The protein localises to the cytoplasm. Its pathway is protein biosynthesis; polypeptide chain elongation. Functionally, involved in peptide bond synthesis. Alleviates ribosome stalling that occurs when 3 or more consecutive Pro residues or the sequence PPG is present in a protein, possibly by augmenting the peptidyl transferase activity of the ribosome. Modification of Lys-34 is required for alleviation. This Vibrio atlanticus (strain LGP32) (Vibrio splendidus (strain Mel32)) protein is Elongation factor P.